The sequence spans 698 residues: Sulfhydryl oxidase 2 (698 aa).

The signal sequence occupies residues 1-21 (MAAAGAAVARSPGIGAGPALR). Positions 34–178 (PRLLVLLAAA…RQTMIDFLQN (145 aa)) constitute a Thioredoxin domain. A glycan (N-linked (GlcNAc...) asparagine) is linked at N77. Catalysis depends on nucleophile residues C91 and C94. 2 cysteine pairs are disulfide-bonded: C91–C94 and C122–C131. 3 N-linked (GlcNAc...) asparagine glycosylation sites follow: N178, N218, and N266. A disulfide bridge links C418 with C430. Residues 421 to 530 (SRSELRGYPC…EDPRFPKLQW (110 aa)) enclose the ERV/ALR sulfhydryl oxidase domain. Residues R426, W433, H437, E478, H482, 505 to 512 (WKKHNMVN), K527, and W530 contribute to the FAD site. C476 and C479 are oxidised to a cystine. A disulfide bridge links C536 with C539. The tract at residues 570 to 624 (TYSADQGDSSEGGTLARGEEEEKRLTPPEVSHGDRDTQSVRPPGALGPRPALPES) is disordered. Residues 572–581 (SADQGDSSEG) are compositionally biased toward polar residues. Residue S579 is modified to Phosphoserine. Basic and acidic residues predominate over residues 586 to 607 (RGEEEEKRLTPPEVSHGDRDTQ). Low complexity predominate over residues 610 to 622 (RPPGALGPRPALP). Residues 662 to 682 (SLCVVLYVASSLFLMVMYFFF) form a helical membrane-spanning segment.

It belongs to the quiescin-sulfhydryl oxidase (QSOX) family. Requires FAD as cofactor. As to expression, expressed in pancreas, brain, placenta, kidney, heart and fetal tissues. Weakly expressed in lung, liver and skeletal muscles.

It localises to the membrane. The protein localises to the secreted. Its subcellular location is the cell membrane. The protein resides in the nucleus membrane. It catalyses the reaction 2 R'C(R)SH + O2 = R'C(R)S-S(R)CR' + H2O2. Its function is as follows. Catalyzes the oxidation of sulfhydryl groups in peptide and protein thiols to disulfides with the reduction of oxygen to hydrogen peroxide. May contribute to disulfide bond formation in a variety of secreted proteins. Also seems to play a role in regulating the sensitization of neuroblastoma cells for interferon-gamma-induced apoptosis. This chain is Sulfhydryl oxidase 2 (QSOX2), found in Homo sapiens (Human).